Reading from the N-terminus, the 938-residue chain is Isoleucine--tRNA ligase (938 aa).

Residues 58-68 carry the 'HIGH' region motif; that stretch reads PYANGNIHIGH. E561 contributes to the L-isoleucyl-5'-AMP binding site. The short motif at 602–606 is the 'KMSKS' region element; it reads KMSKS. Position 605 (K605) interacts with ATP. Residues C901, C904, C921, and C924 each coordinate Zn(2+).

This sequence belongs to the class-I aminoacyl-tRNA synthetase family. IleS type 1 subfamily. Monomer. Requires Zn(2+) as cofactor.

It is found in the cytoplasm. It catalyses the reaction tRNA(Ile) + L-isoleucine + ATP = L-isoleucyl-tRNA(Ile) + AMP + diphosphate. Its function is as follows. Catalyzes the attachment of isoleucine to tRNA(Ile). As IleRS can inadvertently accommodate and process structurally similar amino acids such as valine, to avoid such errors it has two additional distinct tRNA(Ile)-dependent editing activities. One activity is designated as 'pretransfer' editing and involves the hydrolysis of activated Val-AMP. The other activity is designated 'posttransfer' editing and involves deacylation of mischarged Val-tRNA(Ile). This is Isoleucine--tRNA ligase from Yersinia pestis bv. Antiqua (strain Angola).